The chain runs to 538 residues: Natural resistance-associated macrophage protein 1 (538 aa).

Positions 1 to 36 (MTGDTDPPKQSRTQYGSISSSPSPGPPQVPPGGTYL) are disordered. The Cytoplasmic portion of the chain corresponds to 1–54 (MTGDTDPPKQSRTQYGSISSSPSPGPPQVPPGGTYLSEKIPIPNAEPGTFSLRK). Residues 55–75 (LWAFTGPGFLMSIAYLDPGNI) form a helical membrane-spanning segment. The Extracellular segment spans residues 76-81 (QSDLQA). The chain crosses the membrane as a helical span at residues 82-102 (GAVAGFKLLWVLLWATVLGLL). At 103-139 (CQRLAARLGVVTGKDLGEICHLYYPKVPRTLLWLNME) the chain is on the cytoplasmic side. The helical transmembrane segment at 140 to 160 (LAIVGSDMQEVIGTAIAFNLL) threads the bilayer. The Extracellular segment spans residues 161–164 (SAGR). Residues 165–185 (IPLWGGVLITVVDTFFFLYLN) traverse the membrane as a helical segment. At 186 to 193 (NYGLRKLE) the chain is on the cytoplasmic side. Residues 194–214 (AFFAFLIAIMAFTFGYEYVVA) traverse the membrane as a helical segment. Over 215-240 (RPAQGALLRGLFLPSCSGCGQPELLQ) the chain is Extracellular. The chain crosses the membrane as a helical span at residues 241-261 (AVGIVGAIIMPHNIYLHSALV). The Cytoplasmic segment spans residues 262–286 (KSREVDRTRREDIREANMYFLIEST). Residues 287–307 (IALFVSFFINLFVMAVFGQAF) traverse the membrane as a helical segment. Topologically, residues 308 to 346 (YQQTNQAAFNICANSSLHDYAKIFPRNNLTVAVDFYQGG) are extracellular. Residues Asn-321 and Asn-335 are each glycosylated (N-linked (GlcNAc...) asparagine). Residues 347–367 (VILGCLFGPAALYIWAVGLLA) traverse the membrane as a helical segment. Residues 368 to 394 (AGQSSTMTGTYAGQFVMEGFLKLRWSR) lie on the Cytoplasmic side of the membrane. The chain crosses the membrane as a helical span at residues 395-415 (FARLLLTRSCAILPALLVAVF). At 416 to 432 (KELQDLSSLNDLLNVLQ) the chain is on the extracellular side. The chain crosses the membrane as a helical span at residues 433–453 (SLLLPFAVLPILTFTSMPALM). Over 454–468 (QEFASGRVNKVITSS) the chain is Cytoplasmic. Residues 469–489 (IMLLVCAINFYFLVSYLPSLP) form a helical membrane-spanning segment. The Extracellular segment spans residues 490-492 (HPA). Residues 493–513 (YFGLVALLAVIYLGLTTYLVW) traverse the membrane as a helical segment. At 514–538 (TCLIAHGATLLVHSSHQHFLYGLLE) the chain is on the cytoplasmic side.

It belongs to the NRAMP family.

It is found in the late endosome membrane. Its subcellular location is the lysosome membrane. The catalysed reaction is Zn(2+)(in) + H(+)(out) = Zn(2+)(out) + H(+)(in). It catalyses the reaction Fe(2+)(in) + H(+)(out) = Fe(2+)(out) + H(+)(in). It carries out the reaction Mn(2+)(in) + H(+)(out) = Mn(2+)(out) + H(+)(in). In terms of biological role, macrophage-specific antiporter that fluxes metal ions in either direction against a proton gradient. Localized to late endosomal lysosomal membranes, delivers bivalent cations from the cytosol into these acidic compartments where they may directly affect antimicrobial activity. Involved in iron metabolism and host natural resistance to infection with intracellular parasites. Pathogen resistance involves sequestration of Fe(2+) and Mn(2+), cofactors of both prokaryotic and eukaryotic catalases and superoxide dismutases, not only to protect the macrophage against its own generation of reactive oxygen species, but to deny the cations to the pathogen for synthesis of its protective enzymes. The sequence is that of Natural resistance-associated macrophage protein 1 (SLC11A1) from Sus scrofa (Pig).